The sequence spans 181 residues: Ubiquitin-like protein 4B (181 aa).

A Ubiquitin-like domain is found at 1-76; it reads MWLTVKLLLG…LNVIIRPLEK (76 aa). A disordered region spans residues 139 to 181; it reads PEGKHSGATGSTRESKGDMEPRRNMKCNLAHKDGFKREKSPGK. Composition is skewed to basic and acidic residues over residues 151 to 161 and 168 to 181; these read RESKGDMEPRR and AHKDGFKREKSPGK.

Its subcellular location is the cytoplasm. The polypeptide is Ubiquitin-like protein 4B (UBL4B) (Monodelphis domestica (Gray short-tailed opossum)).